We begin with the raw amino-acid sequence, 62 residues long: Small ribosomal subunit protein eS17 (62 aa).

The protein belongs to the eukaryotic ribosomal protein eS17 family.

The sequence is that of Small ribosomal subunit protein eS17 from Methanoculleus marisnigri (strain ATCC 35101 / DSM 1498 / JR1).